The chain runs to 59 residues: MLKFAKFRRECVAEFRRVVWPARTQVHTAVKVVLVSTVVMALFLGLIDALFVALLSFFF.

The helical transmembrane segment at valine 39–phenylalanine 59 threads the bilayer.

Belongs to the SecE/SEC61-gamma family. In terms of assembly, component of the Sec protein translocase complex. Heterotrimer consisting of SecY, SecE and SecG subunits. The heterotrimers can form oligomers, although 1 heterotrimer is thought to be able to translocate proteins. Interacts with the ribosome. Interacts with SecDF, and other proteins may be involved. Interacts with SecA.

The protein localises to the cell inner membrane. Its function is as follows. Essential subunit of the Sec protein translocation channel SecYEG. Clamps together the 2 halves of SecY. May contact the channel plug during translocation. In Treponema pallidum (strain Nichols), this protein is Protein translocase subunit SecE.